We begin with the raw amino-acid sequence, 296 residues long: MKKVLLGFAAFTLSLSLAACSSNDSEKVSTEKETPQASTDVEKKTEQKESTKEKTADKSKEKDKKELVDVTLDRAVDGDTIKVTYNGNVDTVRYLLIDTPETKKPNSCVQPYGEDASKRNKELVNSGKLQLEFDKGDRRDKYGRLLAYVYVDGKSVQETLLKEGLARVAYVYEPNTKYIDQFKKDEQEAKSEKLSIWSKNGYVTDRGFNGCVKEKTTAVKKATTSKPAATQPTTPKASSETSTTTEKEASSETTGGTETFKNCTELRKKYPNGVPSSHPAYQSKMDRDHDNYACER.

The N-terminal stretch at 1–19 (MKKVLLGFAAFTLSLSLAA) is a signal peptide. Cys-20 is lipidated: N-palmitoyl cysteine. Cys-20 carries S-diacylglycerol cysteine lipidation. A disordered region spans residues 20-65 (CSSNDSEKVSTEKETPQASTDVEKKTEQKESTKEKTADKSKEKDKK). The span at 24–65 (DSEKVSTEKETPQASTDVEKKTEQKESTKEKTADKSKEKDKK) shows a compositional bias: basic and acidic residues. The TNase-like domain maps to 66–199 (ELVDVTLDRA…KSEKLSIWSK (134 aa)). Asp-79 is a Ca(2+) binding site. The active site involves Arg-93. Ca(2+) contacts are provided by Asp-98 and Thr-99. Active-site residues include Glu-101 and Arg-144. A disordered region spans residues 218-296 (AVKKATTSKP…RDHDNYACER (79 aa)). A compositionally biased stretch (low complexity) spans 219-244 (VKKATTSKPAATQPTTPKASSETSTT). Over residues 284–296 (KMDRDHDNYACER) the composition is skewed to basic and acidic residues.

Ca(2+) is required as a cofactor. Requires Cu(2+) as cofactor. The cofactor is Mn(2+).

Its subcellular location is the cell membrane. Its activity is regulated as follows. Inhibited by aurintricalboxylic acid but not by Zn(2+), Mn(2+), Hg(2+), 2-mercaptoethanol and sodium citrate. Neither inhibited nor activated by ATP. Catalyzes the hydrolysis of supercoiled double and single strand DNA and RNA. Involved in chromosomal DNA degradation and cell death caused by thermal stress. In Bacillus subtilis (strain 168), this protein is SPbeta prophage-derived endonuclease YokF (yokF).